Reading from the N-terminus, the 822-residue chain is Pentatricopeptide repeat-containing protein At2g18940, chloroplastic (822 aa).

The tract at residues 1-42 (MDGALFPHKPPYPIQSKRPPPSQSSNQSIKFSSATLHLPPPS) is disordered. A chloroplast-targeting transit peptide spans 1-77 (MDGALFPHKP…SAAARFPSLE (77 aa)). Positions 8–22 (HKPPYPIQSKRPPPS) are enriched in pro residues. Positions 23-37 (QSSNQSIKFSSATLH) are enriched in low complexity. PPR repeat units follow at residues 209–243 (DVRAYTTILHAYSRTGKYEKAIDLFERMKEMGPSP), 244–279 (TLVTYNVILDVFGKMGRSWRKILGVLDEMRSKGLKF), 280–314 (DEFTCSTVLSACAREGLLREAKEFFAELKSCGYEP), 315–349 (GTVTYNALLQVFGKAGVYTEALSVLKEMEENSCPA), 350–384 (DSVTYNELVAAYVRAGFSKEAAGVIEMMTKKGVMP), 385–419 (NAITYTTVIDAYGKAGKEDEALKLFYSMKEAGCVP), 420–454 (NTCTYNAVLSLLGKKSRSNEMIKMLCDMKSNGCSP), 455–489 (NRATWNTMLALCGNKGMDKFVNRVFREMKSCGFEP), 490–524 (DRDTFNTLISAYGRCGSEVDASKMYGEMTRAGFNA), 525–559 (CVTTYNALLNALARKGDWRSGENVISDMKSKGFKP), 560–594 (TETSYSLMLQCYAKGGNYLGIERIENRIKEGQIFP), 595–629 (SWMLLRTLLLANFKCRALAGSERAFTLFKKHGYKP), 630–664 (DMVIFNSMLSIFTRNNMYDQAEGILESIREDGLSP), 665–699 (DLVTYNSLMDMYVRRGECWKAEEILKTLEKSQLKP), 700–734 (DLVSYNTVIKGFCRRGLMQEAVRMLSEMTERGIRP), 735–769 (CIFTYNTFVSGYTAMGMFAEIEDVIECMAKNDCRP), and 770–800 (NELTFKMVVDGYCRAGKYSEAMDFVSKIKTF).

The protein belongs to the PPR family. P subfamily.

The protein resides in the plastid. Its subcellular location is the chloroplast. The protein is Pentatricopeptide repeat-containing protein At2g18940, chloroplastic of Arabidopsis thaliana (Mouse-ear cress).